We begin with the raw amino-acid sequence, 79 residues long: uncharacterized protein (79 aa).

The next 2 membrane-spanning stretches (helical) occupy residues 18–38 (IWIINLKVIIKIIISEIIVLI) and 50–70 (GITFVKNEFIISSIFYFFFLF).

The protein localises to the host membrane. This is an uncharacterized protein from Spiroplasma virus SpV1-R8A2 B (SpV1).